Here is a 937-residue protein sequence, read N- to C-terminus: Protein translocase subunit SecA (937 aa).

ATP contacts are provided by residues Q87, 105–109 (GEGKT), and D494. The interval 881-937 (RGLNYIGPDEGGRASVHSDAEEYGGGTPAAAGTRRERREAARAEGKGKRGPKSRRKH) is disordered. Basic and acidic residues-rich tracts occupy residues 890 to 900 (EGGRASVHSDA) and 913 to 927 (TRRE…EGKG). The span at 928 to 937 (KRGPKSRRKH) shows a compositional bias: basic residues.

This sequence belongs to the SecA family. As to quaternary structure, monomer and homodimer. Part of the essential Sec protein translocation apparatus which comprises SecA, SecYEG and auxiliary proteins SecDF. Other proteins may also be involved.

The protein localises to the cell membrane. It localises to the cytoplasm. It catalyses the reaction ATP + H2O + cellular proteinSide 1 = ADP + phosphate + cellular proteinSide 2.. Functionally, part of the Sec protein translocase complex. Interacts with the SecYEG preprotein conducting channel. Has a central role in coupling the hydrolysis of ATP to the transfer of proteins into and across the cell membrane, serving as an ATP-driven molecular motor driving the stepwise translocation of polypeptide chains across the membrane. The protein is Protein translocase subunit SecA of Nocardia farcinica (strain IFM 10152).